The chain runs to 404 residues: Glucose-1-phosphate adenylyltransferase (404 aa).

Alpha-D-glucose 1-phosphate-binding positions include Y99, G164, 179 to 180, and S197; that span reads EK.

Belongs to the bacterial/plant glucose-1-phosphate adenylyltransferase family. As to quaternary structure, homotetramer.

The enzyme catalyses alpha-D-glucose 1-phosphate + ATP + H(+) = ADP-alpha-D-glucose + diphosphate. It participates in glycan biosynthesis; glycogen biosynthesis. Functionally, involved in the biosynthesis of ADP-glucose, a building block required for the elongation reactions to produce glycogen. Catalyzes the reaction between ATP and alpha-D-glucose 1-phosphate (G1P) to produce pyrophosphate and ADP-Glc. This is Glucose-1-phosphate adenylyltransferase from Rhodococcus jostii (strain RHA1).